Consider the following 322-residue polypeptide: Beta-ketoacyl-[acyl-carrier-protein] synthase III (322 aa).

Residues Cys113 and His249 contribute to the active site. The tract at residues 250 to 254 is ACP-binding; sequence QANIR. The active site involves Asn279.

The protein belongs to the thiolase-like superfamily. FabH family. As to quaternary structure, homodimer.

It is found in the cytoplasm. The enzyme catalyses malonyl-[ACP] + acetyl-CoA + H(+) = 3-oxobutanoyl-[ACP] + CO2 + CoA. The protein operates within lipid metabolism; fatty acid biosynthesis. Catalyzes the condensation reaction of fatty acid synthesis by the addition to an acyl acceptor of two carbons from malonyl-ACP. Catalyzes the first condensation reaction which initiates fatty acid synthesis and may therefore play a role in governing the total rate of fatty acid production. Possesses both acetoacetyl-ACP synthase and acetyl transacylase activities. Its substrate specificity determines the biosynthesis of branched-chain and/or straight-chain of fatty acids. The protein is Beta-ketoacyl-[acyl-carrier-protein] synthase III of Thioalkalivibrio sulfidiphilus (strain HL-EbGR7).